Consider the following 285-residue polypeptide: Eukaryotic translation initiation factor 3 subunit F-2 (285 aa).

The MPN domain maps to Val-11 to Gly-145.

The protein belongs to the eIF-3 subunit F family. As to quaternary structure, component of the eukaryotic translation initiation factor 3 (eIF-3) complex. The eIF-3 complex interacts with pix.

It localises to the cytoplasm. In terms of biological role, component of the eukaryotic translation initiation factor 3 (eIF-3) complex, which is involved in protein synthesis of a specialized repertoire of mRNAs and, together with other initiation factors, stimulates binding of mRNA and methionyl-tRNAi to the 40S ribosome. The eIF-3 complex specifically targets and initiates translation of a subset of mRNAs involved in cell proliferation. The protein is Eukaryotic translation initiation factor 3 subunit F-2 of Drosophila simulans (Fruit fly).